The primary structure comprises 212 residues: uncharacterized protein (212 aa).

Residues 5–25 (IFIILIAVLLIGVNIKKIAAA) traverse the membrane as a helical segment.

It is found in the membrane. This is an uncharacterized protein from Borreliella burgdorferi (strain ATCC 35210 / DSM 4680 / CIP 102532 / B31) (Borrelia burgdorferi).